A 175-amino-acid polypeptide reads, in one-letter code: Adenine phosphoribosyltransferase (175 aa).

The protein belongs to the purine/pyrimidine phosphoribosyltransferase family. As to quaternary structure, homodimer.

The protein resides in the cytoplasm. The catalysed reaction is AMP + diphosphate = 5-phospho-alpha-D-ribose 1-diphosphate + adenine. It functions in the pathway purine metabolism; AMP biosynthesis via salvage pathway; AMP from adenine: step 1/1. In terms of biological role, catalyzes a salvage reaction resulting in the formation of AMP, that is energically less costly than de novo synthesis. The chain is Adenine phosphoribosyltransferase from Oenococcus oeni (strain ATCC BAA-331 / PSU-1).